Reading from the N-terminus, the 155-residue chain is MSRRGTAEKKTAKSDPIYRNRLVNMLVNRILKHGKKSLAYQIIYRAMKKIQQKTETNPLSVLRQAIRGVTPDIAVKARRVGGSTHQVPIEIGSTQGKALAIRWLLGASRKRPGRNMAFKLSSELVDAAKGSGDAIRKKEETHRMAEANRAFAHFR.

The protein belongs to the universal ribosomal protein uS7 family. In terms of assembly, part of the 30S ribosomal subunit.

Its subcellular location is the plastid. It localises to the chloroplast. Functionally, one of the primary rRNA binding proteins, it binds directly to 16S rRNA where it nucleates assembly of the head domain of the 30S subunit. This is Small ribosomal subunit protein uS7cz/uS7cy (rps7-A) from Lotus japonicus (Lotus corniculatus var. japonicus).